The following is a 729-amino-acid chain: Fatty acid oxidation complex subunit alpha (729 aa).

An enoyl-CoA hydratase/isomerase region spans residues 1–189; the sequence is MLYKGDTLYL…KIGLVDGVVK (189 aa). Asp-296 serves as a coordination point for substrate. Residues 311 to 729 form a 3-hydroxyacyl-CoA dehydrogenase region; it reads ETPKQAAVLG…ARPVGSLKTA (419 aa). NAD(+) contacts are provided by residues Met-324, Asp-343, 400–402, Lys-407, and Ser-429; that span reads VVE. The For 3-hydroxyacyl-CoA dehydrogenase activity role is filled by His-450. Residue Asn-453 coordinates NAD(+). Residues Asn-500 and Tyr-660 each coordinate substrate. Positions 708–729 are disordered; it reads RHNEPYYPPVEPARPVGSLKTA.

It in the N-terminal section; belongs to the enoyl-CoA hydratase/isomerase family. The protein in the C-terminal section; belongs to the 3-hydroxyacyl-CoA dehydrogenase family. As to quaternary structure, heterotetramer of two alpha chains (FadB) and two beta chains (FadA).

It catalyses the reaction a (3S)-3-hydroxyacyl-CoA + NAD(+) = a 3-oxoacyl-CoA + NADH + H(+). The catalysed reaction is a (3S)-3-hydroxyacyl-CoA = a (2E)-enoyl-CoA + H2O. It carries out the reaction a 4-saturated-(3S)-3-hydroxyacyl-CoA = a (3E)-enoyl-CoA + H2O. The enzyme catalyses (3S)-3-hydroxybutanoyl-CoA = (3R)-3-hydroxybutanoyl-CoA. It catalyses the reaction a (3Z)-enoyl-CoA = a 4-saturated (2E)-enoyl-CoA. The catalysed reaction is a (3E)-enoyl-CoA = a 4-saturated (2E)-enoyl-CoA. Its pathway is lipid metabolism; fatty acid beta-oxidation. Functionally, involved in the aerobic and anaerobic degradation of long-chain fatty acids via beta-oxidation cycle. Catalyzes the formation of 3-oxoacyl-CoA from enoyl-CoA via L-3-hydroxyacyl-CoA. It can also use D-3-hydroxyacyl-CoA and cis-3-enoyl-CoA as substrate. The chain is Fatty acid oxidation complex subunit alpha from Salmonella gallinarum (strain 287/91 / NCTC 13346).